A 390-amino-acid polypeptide reads, in one-letter code: Neuromedin-B receptor (390 aa).

The Extracellular portion of the chain corresponds to 1-44; sequence MPPKSLSNLSQTAGVNQSGFFPGASERDFLPATDRTTAEFVIRC. N-linked (GlcNAc...) asparagine glycosylation is found at N8 and N16. A helical transmembrane segment spans residues 45–65; the sequence is VIPSLYLLIITVGLLGNIVLV. The Cytoplasmic segment spans residues 66–76; sequence KIFLTNSAMRS. Residues 77 to 97 traverse the membrane as a helical segment; it reads VPNIFISNLAAGDVLLLLTCV. Residues 98–117 are Extracellular-facing; the sequence is PVDASRYFLDEWMFGKVGCK. C116 and C198 are oxidised to a cystine. The helical transmembrane segment at 118–138 threads the bilayer; it reads LIPVIQLTSVGVSVFTLTALS. The Cytoplasmic portion of the chain corresponds to 139–155; the sequence is ADRYRAIVNPMDIQTSG. The helical transmembrane segment at 156-176 threads the bilayer; that stretch reads AVLWTCVKAGGIWVVSVLLAV. At 177-210 the chain is on the extracellular side; the sequence is PEAVFSEVARIDGLDNGSFTACIPYPQTDELHPK. N-linked (GlcNAc...) asparagine glycosylation occurs at N192. A helical transmembrane segment spans residues 211 to 231; sequence IHSVLIFLVYFLIPLGIISVY. The Cytoplasmic segment spans residues 232–266; sequence YYHIAKTLIKSAHNLPGEYNEHTKKQMETRKRLAK. Residues 267-287 traverse the membrane as a helical segment; it reads IVLVFVGCFVFCWFPNHILYM. Topologically, residues 288–305 are extracellular; it reads YRSFNYNEIDPSLGHMIV. The chain crosses the membrane as a helical span at residues 306–328; it reads TLVARVLSFCNSCVNPFALYLLS. The Cytoplasmic portion of the chain corresponds to 329 to 390; it reads ESFRKHFNNQ…GHSVKQEMAL (62 aa). C341 is lipidated: S-palmitoyl cysteine. S352 carries the post-translational modification Phosphoserine.

Belongs to the G-protein coupled receptor 1 family. In terms of tissue distribution, highly expressed in peripheral tissues where it is detected in the respiratory system, circulatory system, digestive system, urogenital system, lymphatic organs and endocrine system (at protein level). In the testis, expressed mainly in Leydig cells (at protein level).

The protein resides in the cell membrane. Functionally, receptor for neuromedin-B. Contributes to the maintenance of basal sigh rate through signaling in the pre-Botzinger complex, a cluster of several thousand neurons in the ventrolateral medulla responsible for inspiration during respiratory activity. Contributes to the induction of sneezing following exposure to chemical irritants or allergens which causes release of NMB by nasal sensory neurons and activation of NMBR-expressing neurons in the sneeze-evoking region of the brainstem. These in turn activate neurons of the caudal ventral respiratory group, giving rise to the sneezing response. Contributes to induction of acute itch, possibly through its activation on dorsal root ganglion neurons by the NMB peptide. Plays a role in the innate immune response to influenza A virus infection by enhancing interferon alpha expression and reducing expression of IL6. Plays a role in CSF1-induced proliferation of osteoclast precursors by contributing to the positive regulation of the expression of the CSF1 receptor CSF1R. This chain is Neuromedin-B receptor (NMBR), found in Sus scrofa (Pig).